A 61-amino-acid polypeptide reads, in one-letter code: Metallothionein-1E (61 aa).

The residue at position 1 (M1) is an N-acetylmethionine. Positions M1–C29 are beta. Residues C5, C7, C13, C15, C19, C21, C24, C26, C29, C33, C34, C36, C37, C41, C44, C48, C50, C57, C59, and C60 each coordinate a divalent metal cation. Residues K30 to A61 form an alpha region.

Belongs to the metallothionein superfamily. Type 1 family. In terms of assembly, monomer.

In terms of biological role, metallothioneins have a high content of cysteine residues that bind various heavy metals; these proteins are transcriptionally regulated by both heavy metals and glucocorticoids. This is Metallothionein-1E (MT1E) from Homo sapiens (Human).